Here is a 360-residue protein sequence, read N- to C-terminus: MLVWLAEHLVKYYSGFNVFSYLTFRAIVSLLTALFISLWMGPRMIARLQKLSFGQVVRNDGPESHFSKRGTPTMGGIMILTAIVVSVLLWAYPSNPYVWCVLTVLIGYGIIGFVDDYRKVVRKDTKGLIARWKYFWMSVIALGVAFALYLAGKDTPATELVVPFFKDVMPQLGLFYILLAYFVIVGTGNAVNLTDGLDGLAIMPTVFVAGGFALVAWATGNMNFANYLHIPYLRHAGELVIVCTAIVGAGLGFLWFNTYPAQVFMGDVGSLALGGALGIIAVLLRQEFLLVIMGGVFVVETLSVILQVGSFKLRGQRIFRMAPIHHHYELKGWPEPRVIVRFWIISLMLVLIGLATLKVR.

10 consecutive transmembrane segments (helical) span residues 26 to 46 (AIVSLLTALFISLWMGPRMIA), 72 to 92 (PTMGGIMILTAIVVSVLLWAY), 94 to 114 (SNPYVWCVLTVLIGYGIIGFV), 132 to 152 (WKYFWMSVIALGVAFALYLAG), 168 to 188 (VMPQLGLFYILLAYFVIVGTG), 199 to 219 (GLAIMPTVFVAGGFALVAWAT), 236 to 256 (AGELVIVCTAIVGAGLGFLWF), 263 to 283 (VFMGDVGSLALGGALGIIAVL), 288 to 308 (FLLVIMGGVFVVETLSVILQV), and 338 to 358 (VIVRFWIISLMLVLIGLATLK).

It belongs to the glycosyltransferase 4 family. MraY subfamily. Mg(2+) is required as a cofactor.

It localises to the cell inner membrane. The enzyme catalyses UDP-N-acetyl-alpha-D-muramoyl-L-alanyl-gamma-D-glutamyl-meso-2,6-diaminopimeloyl-D-alanyl-D-alanine + di-trans,octa-cis-undecaprenyl phosphate = di-trans,octa-cis-undecaprenyl diphospho-N-acetyl-alpha-D-muramoyl-L-alanyl-D-glutamyl-meso-2,6-diaminopimeloyl-D-alanyl-D-alanine + UMP. The protein operates within cell wall biogenesis; peptidoglycan biosynthesis. Its function is as follows. Catalyzes the initial step of the lipid cycle reactions in the biosynthesis of the cell wall peptidoglycan: transfers peptidoglycan precursor phospho-MurNAc-pentapeptide from UDP-MurNAc-pentapeptide onto the lipid carrier undecaprenyl phosphate, yielding undecaprenyl-pyrophosphoryl-MurNAc-pentapeptide, known as lipid I. This Enterobacter sp. (strain 638) protein is Phospho-N-acetylmuramoyl-pentapeptide-transferase.